A 793-amino-acid polypeptide reads, in one-letter code: Ankyrin repeat domain-containing protein SOWAHB (793 aa).

Disordered stretches follow at residues 83–185, 219–290, 337–360, and 396–543; these read EEGL…QARA, ATAE…ELLT, QLPL…SSHS, and DFVD…SPRV. Composition is skewed to low complexity over residues 96–108, 134–144, and 175–185; these read APSA…CSPR, AGAAARAADAA, and AAAAAGAQARA. Phosphoserine is present on S106. Positions 220–244 are enriched in basic and acidic residues; the sequence is TAEEKPARALPAQDDRGASREREEG. The segment covering 246–273 has biased composition (low complexity); it reads LAEPAPVPAVAHSPPATVEAATSRASPP. S271 is subject to Phosphoserine. Residues 396-406 are compositionally biased toward acidic residues; that stretch reads DFVDQESDGSE. 2 stretches are compositionally biased toward low complexity: residues 407–417 and 498–508; these read ESSSGPKDSPG and RSSLAGRAKLS. Positions 521 to 533 are enriched in basic residues; the sequence is KRSRRPPRSRKPS. ANK repeat units follow at residues 630–659 and 669–699; these read TGYT…KAGI and CGYT…RVNV. S761 carries the post-translational modification Phosphoserine.

Belongs to the SOWAH family.

This chain is Ankyrin repeat domain-containing protein SOWAHB (SOWAHB), found in Homo sapiens (Human).